A 390-amino-acid chain; its full sequence is Protein MalY (390 aa).

At Lys-233 the chain carries N6-(pyridoxal phosphate)lysine.

Belongs to the class-II pyridoxal-phosphate-dependent aminotransferase family. MalY/PatB cystathionine beta-lyase subfamily. In terms of assembly, homodimer. Interacts with MalT. Requires pyridoxal 5'-phosphate as cofactor.

The catalysed reaction is L,L-cystathionine + H2O = L-homocysteine + pyruvate + NH4(+). It carries out the reaction an S-substituted L-cysteine + H2O = a thiol + pyruvate + NH4(+). Its function is as follows. Acts as a beta-cystathionase and as a repressor of the maltose regulon. This chain is Protein MalY (malY), found in Escherichia coli (strain K12).